Here is a 33-residue protein sequence, read N- to C-terminus: Alpha-amanitin proprotein 2 (33 aa).

A propeptide spanning residues 1-10 (MSDINATRLP) is cleaved from the precursor. A (3R,4R)-4,5-dihydroxyisoleucine; in form alpha-amanitin modification is found at Ile11. The residue at position 11 (Ile11) is a (3R,4S)-4-hydroxyisoleucine; in form gamma-amanitin. The cyclopeptide (Ile-Pro) cross-link spans 11-18 (IWGIGCNP). The 2'-cysteinyl-6'-hydroxytryptophan sulfoxide (Trp-Cys) cross-link spans 12 to 16 (WGIGC). At Pro18 the chain carries 4-hydroxyproline. The propeptide occupies 19–33 (CVGDDVTSVLTRGEA).

It belongs to the MSDIN fungal toxin family. Post-translationally, processed by the macrocyclase-peptidase enzyme POPB to yield a toxic cyclic octapeptide. POPB first removes 10 residues from the N-terminus. Conformational trapping of the remaining peptide forces the enzyme to release this intermediate rather than proceed to macrocyclization. The enzyme rebinds the remaining peptide in a different conformation and catalyzes macrocyclization of the N-terminal 8 residues. In terms of tissue distribution, expressed in basidiocarps.

In terms of biological role, major toxin belonging to the bicyclic octapeptides amatoxins that acts by binding non-competitively to RNA polymerase II and greatly slowing the elongation of transcripts from target promoters. This is Alpha-amanitin proprotein 2 from Amanita exitialis (Guangzhou destroying angel).